The chain runs to 2275 residues: Serine-rich adhesin for platelets (2275 aa).

Residues 1–89 (MSKRQKEFHD…VNMLHDQQAF (89 aa)) form the signal peptide. The segment at 90–264 (AASDAPLTSE…TANTITVNKD (175 aa)) is serine-rich repeat region 1, SRR1. The span at 100–111 (LNTQSETVGNQN) shows a compositional bias: polar residues. Disordered regions lie at residues 100–229 (LNTQ…STST) and 751–2247 (NSMS…GLLG). Positions 112-128 (STTIEASTSTADSTSVT) are enriched in low complexity. Over residues 129 to 140 (KNSSSVQTSNSD) the composition is skewed to polar residues. Positions 150-229 (VTSTTNSTSN…NKTSTTSTST (80 aa)) are enriched in low complexity. The interval 265–751 (NLKQYMTTSG…TTFKYEVTRN (487 aa)) is non-repeat region (NRR). Composition is skewed to low complexity over residues 752 to 1392 (SMSD…LSLS) and 1402 to 2218 (SNSA…ATSE). Residues 752-2236 (SMSDSVSTSG…AQSEKRLPDT (1485 aa)) form a serine-rich repeat region 2, SRR2 region. The short motif at 2233 to 2237 (LPDTG) is the LPXTG sorting signal element. Thr2236 is subject to Pentaglycyl murein peptidoglycan amidated threonine. A propeptide spans 2237–2275 (GDSIKQNGLLGGVMTLLVGLGLMKRKKKKDENDQDDSQA) (removed by sortase).

This sequence belongs to the serine-rich repeat protein (SRRP) family. Interacts with human gp-340 (DMBT1). Post-translationally, proteolytically cleaved by a metalloprotease. In terms of processing, glycosylated. It is probable that most of the Ser residues in SSR1 and SSR2 are O-GlcNAcylated. Sequential glycosylation by sugar transferases are able to generate complex sugar polymorphisms.

The protein localises to the secreted. It localises to the cell wall. In terms of biological role, mediates binding to human platelets, possibly through a receptor-ligand interaction. Probably associated with virulence in endovascular infection. Interacts with host (human) gp-340 via the non-repeat region (NRR or binding region). Binding is inhibited by N-acetylneuraminic acid (NeuAc). The protein is Serine-rich adhesin for platelets (sraP) of Staphylococcus aureus (strain MW2).